Reading from the N-terminus, the 393-residue chain is Cobalt-precorrin-5B C(1)-methyltransferase (393 aa).

A disordered region spans residues 1-35 (MSDETRVGEAAEQAATPEKIRKGSARRERGNRTGF). Over residues 18–31 (EKIRKGSARRERGN) the composition is skewed to basic and acidic residues.

Belongs to the CbiD family.

The catalysed reaction is Co-precorrin-5B + S-adenosyl-L-methionine = Co-precorrin-6A + S-adenosyl-L-homocysteine. It functions in the pathway cofactor biosynthesis; adenosylcobalamin biosynthesis; cob(II)yrinate a,c-diamide from sirohydrochlorin (anaerobic route): step 6/10. Its function is as follows. Catalyzes the methylation of C-1 in cobalt-precorrin-5B to form cobalt-precorrin-6A. The chain is Cobalt-precorrin-5B C(1)-methyltransferase from Dechloromonas aromatica (strain RCB).